The chain runs to 121 residues: Flagellar protein FliT (121 aa).

The tract at residues 1-50 is required for homodimerization; the sequence is MNHAPHLYFAWQQLVEKSQLMLRLATEEQWDELIASEMAYVNAVQEIAHL. Positions 60-98 are fliD binding; that stretch reads MQEQLRPMLRLILDNESKVKQLLQIRMDELAKLVGQSSV.

Belongs to the FliT family. Homodimer. Interacts with FliD and FlhC.

Its subcellular location is the cytoplasm. It localises to the cytosol. Dual-function protein that regulates the transcription of class 2 flagellar operons and that also acts as an export chaperone for the filament-capping protein FliD. As a transcriptional regulator, acts as an anti-FlhDC factor; it directly binds FlhC, thus inhibiting the binding of the FlhC/FlhD complex to class 2 promoters, resulting in decreased expression of class 2 flagellar operons. As a chaperone, effects FliD transition to the membrane by preventing its premature polymerization, and by directing it to the export apparatus. In Escherichia coli O139:H28 (strain E24377A / ETEC), this protein is Flagellar protein FliT.